A 349-amino-acid polypeptide reads, in one-letter code: Anthranilate phosphoribosyltransferase (349 aa).

Residues G82, 85–86 (GD), T90, 92–95 (NVST), 110–118 (KHGNRSVSS), and G122 each bind 5-phospho-alpha-D-ribose 1-diphosphate. Anthranilate is bound at residue G82. S94 is a binding site for Mg(2+). Anthranilate is bound at residue N113. R168 is an anthranilate binding site. Mg(2+) is bound by residues D232 and E233.

Belongs to the anthranilate phosphoribosyltransferase family. In terms of assembly, homodimer. Mg(2+) is required as a cofactor.

It catalyses the reaction N-(5-phospho-beta-D-ribosyl)anthranilate + diphosphate = 5-phospho-alpha-D-ribose 1-diphosphate + anthranilate. The protein operates within amino-acid biosynthesis; L-tryptophan biosynthesis; L-tryptophan from chorismate: step 2/5. Its function is as follows. Catalyzes the transfer of the phosphoribosyl group of 5-phosphorylribose-1-pyrophosphate (PRPP) to anthranilate to yield N-(5'-phosphoribosyl)-anthranilate (PRA). In Methanosphaera stadtmanae (strain ATCC 43021 / DSM 3091 / JCM 11832 / MCB-3), this protein is Anthranilate phosphoribosyltransferase.